Consider the following 337-residue polypeptide: tRNA N6-adenosine threonylcarbamoyltransferase (337 aa).

Fe cation contacts are provided by His111 and His115. Residues 134–138 (LVSGG), Asp167, Gly180, and Asn272 each bind substrate. Asp300 is a Fe cation binding site.

It belongs to the KAE1 / TsaD family. Fe(2+) serves as cofactor.

It is found in the cytoplasm. It catalyses the reaction L-threonylcarbamoyladenylate + adenosine(37) in tRNA = N(6)-L-threonylcarbamoyladenosine(37) in tRNA + AMP + H(+). Functionally, required for the formation of a threonylcarbamoyl group on adenosine at position 37 (t(6)A37) in tRNAs that read codons beginning with adenine. Is involved in the transfer of the threonylcarbamoyl moiety of threonylcarbamoyl-AMP (TC-AMP) to the N6 group of A37, together with TsaE and TsaB. TsaD likely plays a direct catalytic role in this reaction. The chain is tRNA N6-adenosine threonylcarbamoyltransferase from Citrobacter koseri (strain ATCC BAA-895 / CDC 4225-83 / SGSC4696).